The following is a 792-amino-acid chain: G-type lectin S-receptor-like serine/threonine-protein kinase At1g61440 (792 aa).

An N-terminal signal peptide occupies residues 1–17 (MGKKRIVLLLFISFSYA). The region spanning 18–137 (EITKESPLSI…VTGRTLWESF (120 aa)) is the Bulb-type lectin domain. The Extracellular portion of the chain corresponds to 18–419 (EITKESPLSI…ELDVHKRKMT (402 aa)). N-linked (GlcNAc...) asparagine glycans are attached at residues asparagine 46, asparagine 127, and asparagine 229. Residues 271 to 307 (PANSCDIYGVCGPFGFCVISDPPKCKCFKGFVPKSIE) enclose the EGF-like; atypical domain. 2 cysteine pairs are disulfide-bonded: cysteine 275–cysteine 287 and cysteine 281–cysteine 295. Asparagine 313, asparagine 329, and asparagine 368 each carry an N-linked (GlcNAc...) asparagine glycan. The 83-residue stretch at 326-408 (CQGNSTGKDA…GEILSIRLAH (83 aa)) folds into the PAN domain. Intrachain disulfides connect cysteine 361/cysteine 382 and cysteine 365/cysteine 371. A helical membrane pass occupies residues 420 to 440 (IVASTVSLTLFVILGFATFGF). Topologically, residues 441-792 (WRNRVKHHDA…EMTESVILGR (352 aa)) are cytoplasmic. The 286-residue stretch at 478–763 (FSLSNKLGHG…DLPLPKQPTF (286 aa)) folds into the Protein kinase domain. ATP-binding positions include 484-492 (LGHGGFGSV) and lysine 506. Phosphoserine occurs at positions 512 and 527. Residues 567-584 (RKRLELDWPKRFDIIQGI) are caM-binding. The Proton acceptor role is filled by aspartate 603. Phosphoserine is present on residues serine 607 and serine 620. Threonine 637 carries the phosphothreonine modification. Phosphoserine is present on residues serine 680 and serine 774.

Belongs to the protein kinase superfamily. Ser/Thr protein kinase family.

The protein resides in the cell membrane. The catalysed reaction is L-seryl-[protein] + ATP = O-phospho-L-seryl-[protein] + ADP + H(+). It carries out the reaction L-threonyl-[protein] + ATP = O-phospho-L-threonyl-[protein] + ADP + H(+). The chain is G-type lectin S-receptor-like serine/threonine-protein kinase At1g61440 from Arabidopsis thaliana (Mouse-ear cress).